Here is a 701-residue protein sequence, read N- to C-terminus: Dynein axonemal intermediate chain 1 (701 aa).

2 disordered regions span residues 1–45 (MPSK…VRPP) and 119–165 (EMVA…DIPA). A phosphoserine mark is found at Ser-124 and Ser-127. The span at 136–155 (ENLEEEEEPKEGEGEAEAEA) shows a compositional bias: acidic residues. 5 WD repeats span residues 382–422 (SSES…SQPC), 431–474 (KHTD…LVHI), 539–579 (AHNM…PMFI), 581–621 (DLNS…YEAI), and 629–668 (KKKN…RKMP).

It belongs to the dynein intermediate chain family. Consists of at least two heavy chains and a number of intermediate and light chains. Interacts with BICD2. Interacts with CFAP45 and CFAP52. Interacts with CFAP53.

It is found in the cytoplasm. It localises to the cytoskeleton. The protein resides in the cilium axoneme. Functionally, part of the dynein complex of respiratory cilia. The chain is Dynein axonemal intermediate chain 1 (Dnai1) from Mus musculus (Mouse).